The primary structure comprises 622 residues: Phosphoenolpyruvate carboxykinase [GTP] (622 aa).

Substrate is bound by residues R86 and 220–222; that span reads YGG. Mn(2+) is bound by residues K229 and H248. S270 is a substrate binding site. Residue 271 to 276 participates in GTP binding; that stretch reads MCGKTS. The active site involves C272. D289 contributes to the Mn(2+) binding site. Residues 360 to 374 are compositionally biased toward basic and acidic residues; that stretch reads ENHSGKWWRGKKDSE. The segment at 360–381 is disordered; the sequence is ENHSGKWWRGKKDSEGNEISPS. Position 384-386 (384-386) interacts with substrate; it reads NAR. The GTP site is built by R386 and R418.

This sequence belongs to the phosphoenolpyruvate carboxykinase [GTP] family. Mn(2+) is required as a cofactor.

The protein localises to the cytoplasm. It carries out the reaction oxaloacetate + GTP = phosphoenolpyruvate + GDP + CO2. Its pathway is carbohydrate biosynthesis; gluconeogenesis. In terms of biological role, catalyzes the conversion of oxaloacetate (OAA) to phosphoenolpyruvate (PEP), the rate-limiting step in the metabolic pathway that produces glucose from lactate and other precursors derived from the citric acid cycle. The chain is Phosphoenolpyruvate carboxykinase [GTP] from Thermococcus sibiricus (strain DSM 12597 / MM 739).